The following is a 1338-amino-acid chain: Phosphoribosylformylglycinamidine synthase (1338 aa).

Serine 215 carries the post-translational modification Phosphoserine. Residues 322–333 (GATTGTGGRIRD) and 402–404 (AGF) contribute to the ATP site. Position 569 is a phosphoserine (serine 569). A phosphothreonine mark is found at threonine 619 and threonine 623. ATP is bound at residue alanine 706. Residues aspartate 707, glutamate 746, asparagine 750, and aspartate 909 each coordinate Mg(2+). Residue serine 911 participates in ATP binding. A Glutamine amidotransferase type-1 domain is found at 1064–1302 (RVAILREEGS…AVMPHPERAV (239 aa)). The active-site Nucleophile is cysteine 1158. Residues histidine 1297 and glutamate 1299 contribute to the active site.

This sequence in the N-terminal section; belongs to the FGAMS family.

The protein localises to the cytoplasm. It catalyses the reaction N(2)-formyl-N(1)-(5-phospho-beta-D-ribosyl)glycinamide + L-glutamine + ATP + H2O = 2-formamido-N(1)-(5-O-phospho-beta-D-ribosyl)acetamidine + L-glutamate + ADP + phosphate + H(+). It functions in the pathway purine metabolism; IMP biosynthesis via de novo pathway; 5-amino-1-(5-phospho-D-ribosyl)imidazole from N(2)-formyl-N(1)-(5-phospho-D-ribosyl)glycinamide: step 1/2. Functionally, phosphoribosylformylglycinamidine synthase involved in the purines biosynthetic pathway. Catalyzes the ATP-dependent conversion of formylglycinamide ribonucleotide (FGAR) and glutamine to yield formylglycinamidine ribonucleotide (FGAM) and glutamate. The chain is Phosphoribosylformylglycinamidine synthase (PFAS) from Homo sapiens (Human).